Consider the following 268-residue polypeptide: Malonyl-[acyl-carrier protein] O-methyltransferase (268 aa).

This sequence belongs to the methyltransferase superfamily.

The enzyme catalyses malonyl-[ACP] + S-adenosyl-L-methionine = malonyl-[ACP] methyl ester + S-adenosyl-L-homocysteine. It functions in the pathway cofactor biosynthesis; biotin biosynthesis. Functionally, converts the free carboxyl group of a malonyl-thioester to its methyl ester by transfer of a methyl group from S-adenosyl-L-methionine (SAM). It allows to synthesize pimeloyl-ACP via the fatty acid synthetic pathway. The protein is Malonyl-[acyl-carrier protein] O-methyltransferase of Prosthecochloris aestuarii (strain DSM 271 / SK 413).